The chain runs to 564 residues: Ferric/cupric reductase transmembrane component 2 (564 aa).

2 helical membrane passes run 10 to 30 and 66 to 86; these read TLGS…LFLL and FIFL…LVML. A glycan (N-linked (GlcNAc...) asparagine) is linked at asparagine 106. The helical transmembrane segment at 110–130 threads the bilayer; sequence VAARLGYLSCGLFFVSYFFSL. The Ferric oxidoreductase domain maps to 114–229; the sequence is LGYLSCGLFF…TCSVLIIFLI (116 aa). Histidine 150 and histidine 164 together coordinate heme. Helical transmembrane passes span 152–172, 184–204, and 210–230; these read WLSV…MIFS, ISIY…ASLP, and FFEW…FLIW. Residues histidine 218 and histidine 232 each contribute to the heme site. The 157-residue stretch at 254–410 folds into the FAD-binding FR-type domain; sequence RLFRSIWNRS…DGPYGTTSNV (157 aa). Residue asparagine 261 is glycosylated (N-linked (GlcNAc...) asparagine). 310–316 lines the FAD pocket; it reads HPFTLAS. Asparagine 350 carries an N-linked (GlcNAc...) asparagine glycan. 419 to 427 provides a ligand contact to NAD(+); it reads LIAGGVGFS. N-linked (GlcNAc...) asparagine glycans are attached at residues asparagine 442, asparagine 496, and asparagine 548.

It belongs to the ferric reductase (FRE) family. FAD serves as cofactor. The cofactor is heme.

The protein localises to the cell membrane. The protein resides in the endoplasmic reticulum membrane. The catalysed reaction is 2 a Fe(II)-siderophore + NADP(+) + H(+) = 2 a Fe(III)-siderophore + NADPH. Metalloreductase responsible for reducing extracellular iron and copper prior to import. Catalyzes the reductive uptake of Fe(3+)-salts and Fe(3+) bound to catecholate or hydroxamate siderophores. Fe(3+) is reduced to Fe(2+), which then dissociates from the siderophore and can be imported by the high-affinity Fe(2+) transport complex in the plasma membrane. Also participates in Cu(2+) reduction and Cu(+) uptake. The sequence is that of Ferric/cupric reductase transmembrane component 2 (frp2) from Schizosaccharomyces pombe (strain 972 / ATCC 24843) (Fission yeast).